Here is a 331-residue protein sequence, read N- to C-terminus: MEKIKILLDTMGYENDLEHVIKAAKDFYYQHEDDLEIILVGNEQLIKPLLDNDWRLFPIVHTEVSIEQNDTILSARKKQNSSMHLALRYLKDKQADGMLTAGNSAVFVYNAYATIGLLEHIKKPAFMPFVPTIDGGVTNLLDVGASIDVDGTDLFNFAIMANTIAKMRTPNPRVGVLNIGTEDHKGLPYHQEANELLKTSNLNYVGFVEPKTILEREVDVLVADGFSGNIALKTMEGVGKTISNFLKNEYKKPKNLFAALLSKPIFKKIKKAFDYKEHAGAFVLGLDGILVKTHGSADYQQFMSALKILYETIKADVLNEIKKDLNNYYGQ.

It belongs to the PlsX family. As to quaternary structure, homodimer. Probably interacts with PlsY.

It is found in the cytoplasm. It catalyses the reaction a fatty acyl-[ACP] + phosphate = an acyl phosphate + holo-[ACP]. It participates in lipid metabolism; phospholipid metabolism. Its function is as follows. Catalyzes the reversible formation of acyl-phosphate (acyl-PO(4)) from acyl-[acyl-carrier-protein] (acyl-ACP). This enzyme utilizes acyl-ACP as fatty acyl donor, but not acyl-CoA. This Ureaplasma parvum serovar 3 (strain ATCC 27815 / 27 / NCTC 11736) protein is Phosphate acyltransferase.